Consider the following 768-residue polypeptide: Cullin-3-A (768 aa).

Positions 677-698 (VAAKQGESDPERKETRQKVDDD) are disordered. Positions 682–698 (GESDPERKETRQKVDDD) are enriched in basic and acidic residues. Residues 698 to 760 (DRKHEIEAAI…REYLARTPED (63 aa)) form the Cullin neddylation domain. K712 is covalently cross-linked (Glycyl lysine isopeptide (Lys-Gly) (interchain with G-Cter in NEDD8)).

This sequence belongs to the cullin family. In terms of assembly, component of multiple BCR (BTB-CUL3-RBX1) E3 ubiquitin-protein ligase complexes formed of cul3, rbx1 and a variable BTB domain-containing protein acting as both, adapter to cullin and substrate recognition subunit. Interacts with btbd6. In terms of processing, neddylated. Attachment of NEDD8 is required for the E3 ubiquitin-protein ligase activity of the SCF-like complex.

It localises to the nucleus. The protein operates within protein modification; protein ubiquitination. Probable core component of cullin-based SCF-like E3 ubiquitin-protein ligase complexes which mediate the ubiquitination and subsequent proteasomal degradation of target proteins. The E3 ubiquitin-protein ligase activity of the complex is dependent on the neddylation of the cullin subunit. Involved in ER-Golgi transport by regulating the size of COPII coats, thereby playing a key role in collagen export, which is required for embryonic stem (ES) cells division. May play a role in the regulation of mittotic entry via ubiquitination of aurka. The protein is Cullin-3-A (cul3a) of Xenopus laevis (African clawed frog).